Here is a 710-residue protein sequence, read N- to C-terminus: Ferrioxamine receptor (710 aa).

Residues 1–26 form the signal peptide; it reads MFSAFIIKRSAILCSLAMFIPLASIA. A TonB box motif is present at residues 28-35; the sequence is DTIEVTAK. Transmembrane regions (beta stranded) follow at residues 29 to 37, 65 to 73, 91 to 99, 106 to 114, 137 to 145, 152 to 160, 180 to 188, 194 to 202, 208 to 216, 259 to 267, 271 to 279, 293 to 301, 309 to 317, 353 to 361, 370 to 378, 427 to 435, 443 to 451, 476 to 484, 491 to 499, 517 to 525, 531 to 539, 555 to 563, 567 to 575, 579 to 587, 610 to 618, 624 to 632, 649 to 657, 671 to 679, 684 to 692, and 702 to 710; these read TIEVTAKAG, TAQSVSVVT, YTPGVFTGF, YDTVALRGF, NVLQVDPWF, IKGPSSALY, SEGHFRLTA, QVAAFDYTD, WAFRLTGIT, GGYHSAVPA, IYGQKLSRG, WQQIYSYEF, WSFRQNASY, FAVDNQLEA, HKVLLGVDF, YEQSGVYLQ, WHLNLSGRY, GRASLLYSF, YVSYSQAIT, EQYEVGIIY, TSLYSAALY, YYVPAGKVN, LELEARSQI, LSVIAGYTY, NMASLWAQY, INVGAGIRY, YTLGDASVR, FVQLNVNNI, YVAACYSTS, and VQATVGYDF. One can recognise a TBDR plug domain in the interval 61–174; sequence PLILTAQSVS…PGGVVMMTSK (114 aa). In terms of domain architecture, TBDR beta-barrel spans 181–710; that stretch reads EGHFRLTAGN…SVQATVGYDF (530 aa). The TonB C-terminal box motif lies at 693 to 710; sequence YCYWGAERSVQATVGYDF.

This sequence belongs to the TonB-dependent receptor family.

It is found in the cell outer membrane. Ferrioxamine binding and uptake, in association with the TonB protein. This is Ferrioxamine receptor (foxA) from Yersinia enterocolitica.